Consider the following 310-residue polypeptide: N-acetyl-gamma-glutamyl-phosphate reductase (310 aa).

Residue cysteine 117 is part of the active site.

This sequence belongs to the NAGSA dehydrogenase family. Type 2 subfamily.

It localises to the cytoplasm. It carries out the reaction N-acetyl-L-glutamate 5-semialdehyde + phosphate + NADP(+) = N-acetyl-L-glutamyl 5-phosphate + NADPH + H(+). The protein operates within amino-acid biosynthesis; L-arginine biosynthesis; N(2)-acetyl-L-ornithine from L-glutamate: step 3/4. In terms of biological role, catalyzes the NADPH-dependent reduction of N-acetyl-5-glutamyl phosphate to yield N-acetyl-L-glutamate 5-semialdehyde. This Rhizobium etli (strain ATCC 51251 / DSM 11541 / JCM 21823 / NBRC 15573 / CFN 42) protein is N-acetyl-gamma-glutamyl-phosphate reductase.